The chain runs to 62 residues: Toxin Ct28 (62 aa).

The signal sequence occupies residues 1–22 (MKAFYGILIILLFCSMFKLNES). Intrachain disulfides connect Cys29-Cys51, Cys35-Cys56, and Cys39-Cys58. Position 61 is an asparagine amide (Asn61).

This sequence belongs to the short scorpion toxin superfamily. Potassium channel inhibitor family. Alpha-KTx 02 subfamily. In terms of tissue distribution, expressed by the venom gland.

Its subcellular location is the secreted. In terms of biological role, blocks voltage-gated potassium channels. The polypeptide is Toxin Ct28 (Centruroides tecomanus (Scorpion)).